Consider the following 152-residue polypeptide: MTITDLVLILFIAVLLAFAIYDQFIMPRRNGPTLLAIPLLRRGRIDSVIFVGLIVILIYNSVTNHGALITTWLLSALALMGFYIFWIRVPKIIFKQKGFFFANVWIEYSRIKAMNLSEDGVLVMQLEQRRLLIRVRNIDDLEKVYKLLVSTQ.

The next 3 membrane-spanning stretches (helical) occupy residues 6-26 (LVLILFIAVLLAFAIYDQFIM), 45-65 (IDSVIFVGLIVILIYNSVTNH), and 67-87 (ALITTWLLSALALMGFYIFWI).

Belongs to the UPF0266 family.

Its subcellular location is the cell inner membrane. The chain is UPF0266 membrane protein YobD from Escherichia coli O127:H6 (strain E2348/69 / EPEC).